Here is a 164-residue protein sequence, read N- to C-terminus: uncharacterized protein (164 aa).

Positions 1 to 129 (MGEVRVVGIR…AVLAQAGLLI (129 aa)) constitute a BFN domain.

This is an uncharacterized protein from Mycobacterium tuberculosis (strain CDC 1551 / Oshkosh).